The following is a 313-amino-acid chain: Ribonuclease HIII (313 aa).

The 217-residue stretch at 94 to 310 (MSVIGSDEVG…TQKAKRLVER (217 aa)) folds into the RNase H type-2 domain. A divalent metal cation contacts are provided by D100, E101, and D205.

Belongs to the RNase HII family. RnhC subfamily. Requires Mn(2+) as cofactor. The cofactor is Mg(2+).

It localises to the cytoplasm. It carries out the reaction Endonucleolytic cleavage to 5'-phosphomonoester.. Its function is as follows. Endonuclease that specifically degrades the RNA of RNA-DNA hybrids. This is Ribonuclease HIII from Bacillus velezensis (strain DSM 23117 / BGSC 10A6 / LMG 26770 / FZB42) (Bacillus amyloliquefaciens subsp. plantarum).